We begin with the raw amino-acid sequence, 196 residues long: Large ribosomal subunit protein uL5 (196 aa).

The protein belongs to the universal ribosomal protein uL5 family. In terms of assembly, part of the 50S ribosomal subunit; part of the 5S rRNA/L5/L18/L25 subcomplex. Contacts the 5S rRNA and the P site tRNA. Forms a bridge to the 30S subunit in the 70S ribosome.

This is one of the proteins that bind and probably mediate the attachment of the 5S RNA into the large ribosomal subunit, where it forms part of the central protuberance. In the 70S ribosome it contacts protein S13 of the 30S subunit (bridge B1b), connecting the 2 subunits; this bridge is implicated in subunit movement. Contacts the P site tRNA; the 5S rRNA and some of its associated proteins might help stabilize positioning of ribosome-bound tRNAs. This Prosthecochloris aestuarii (strain DSM 271 / SK 413) protein is Large ribosomal subunit protein uL5.